Reading from the N-terminus, the 548-residue chain is Acetolactate synthase isozyme 2 large subunit (548 aa).

Glu-47 contributes to the thiamine diphosphate binding site. Residues Arg-149, 251 to 272 (HGTK…VGAR), and 294 to 313 (DIDP…LQGD) contribute to the FAD site. Positions 377-457 (QHQMWAAQHI…LKIVLLDNQR (81 aa)) are thiamine pyrophosphate binding. 2 residues coordinate Mg(2+): Asp-428 and Asn-455.

This sequence belongs to the TPP enzyme family. In terms of assembly, tetramer of two large (IlvG) and two small (IlvM) chains. FAD serves as cofactor. It depends on Mg(2+) as a cofactor. Thiamine diphosphate is required as a cofactor.

It catalyses the reaction 2 pyruvate + H(+) = (2S)-2-acetolactate + CO2. It participates in amino-acid biosynthesis; L-isoleucine biosynthesis; L-isoleucine from 2-oxobutanoate: step 1/4. The protein operates within amino-acid biosynthesis; L-valine biosynthesis; L-valine from pyruvate: step 1/4. Inhibited by the herbicides chlorimuron ethyl, chlorsulfuron and imazapyr. Its function is as follows. Catalyzes the first step in the biosynthesis of branched-chain amino acids. The protein is Acetolactate synthase isozyme 2 large subunit (ilvG) of Escherichia coli (strain K12).